Reading from the N-terminus, the 448-residue chain is Glucose-6-phosphate isomerase (448 aa).

The Proton donor role is filled by glutamate 288. Catalysis depends on residues histidine 309 and lysine 423.

It belongs to the GPI family.

The protein resides in the cytoplasm. The catalysed reaction is alpha-D-glucose 6-phosphate = beta-D-fructose 6-phosphate. It functions in the pathway carbohydrate biosynthesis; gluconeogenesis. The protein operates within carbohydrate degradation; glycolysis; D-glyceraldehyde 3-phosphate and glycerone phosphate from D-glucose: step 2/4. Functionally, catalyzes the reversible isomerization of glucose-6-phosphate to fructose-6-phosphate. The polypeptide is Glucose-6-phosphate isomerase (Fusobacterium nucleatum subsp. nucleatum (strain ATCC 25586 / DSM 15643 / BCRC 10681 / CIP 101130 / JCM 8532 / KCTC 2640 / LMG 13131 / VPI 4355)).